Here is a 92-residue protein sequence, read N- to C-terminus: Putative pterin-4-alpha-carbinolamine dehydratase (92 aa).

It belongs to the pterin-4-alpha-carbinolamine dehydratase family.

The catalysed reaction is (4aS,6R)-4a-hydroxy-L-erythro-5,6,7,8-tetrahydrobiopterin = (6R)-L-erythro-6,7-dihydrobiopterin + H2O. The polypeptide is Putative pterin-4-alpha-carbinolamine dehydratase (Haloarcula marismortui (strain ATCC 43049 / DSM 3752 / JCM 8966 / VKM B-1809) (Halobacterium marismortui)).